Here is a 177-residue protein sequence, read N- to C-terminus: Large ribosomal subunit protein uL6 (177 aa).

This sequence belongs to the universal ribosomal protein uL6 family. In terms of assembly, part of the 50S ribosomal subunit.

Functionally, this protein binds to the 23S rRNA, and is important in its secondary structure. It is located near the subunit interface in the base of the L7/L12 stalk, and near the tRNA binding site of the peptidyltransferase center. This is Large ribosomal subunit protein uL6 from Pseudomonas fluorescens (strain SBW25).